We begin with the raw amino-acid sequence, 266 residues long: Putative pyruvate, phosphate dikinase regulatory protein (266 aa).

149–156 is an ADP binding site; it reads GVSRTSKT.

This sequence belongs to the pyruvate, phosphate/water dikinase regulatory protein family. PDRP subfamily.

It catalyses the reaction N(tele)-phospho-L-histidyl/L-threonyl-[pyruvate, phosphate dikinase] + ADP = N(tele)-phospho-L-histidyl/O-phospho-L-threonyl-[pyruvate, phosphate dikinase] + AMP + H(+). It carries out the reaction N(tele)-phospho-L-histidyl/O-phospho-L-threonyl-[pyruvate, phosphate dikinase] + phosphate + H(+) = N(tele)-phospho-L-histidyl/L-threonyl-[pyruvate, phosphate dikinase] + diphosphate. Bifunctional serine/threonine kinase and phosphorylase involved in the regulation of the pyruvate, phosphate dikinase (PPDK) by catalyzing its phosphorylation/dephosphorylation. This is Putative pyruvate, phosphate dikinase regulatory protein from Geobacillus kaustophilus (strain HTA426).